The sequence spans 486 residues: Protein ZINC INDUCED FACILITATOR 1 (486 aa).

The next 12 membrane-spanning stretches (helical) occupy residues 41–61 (FVWI…PFLY), 82–102 (FVGC…GIVA), 109–129 (PIIL…GLSS), 131–151 (FWMA…LGTM), 170–190 (AVST…GFLA), 212–232 (ALPC…CCFI), 288–308 (IIVY…FALW), 327–347 (TVLA…YPLA), 362–384 (ALMI…SLSL), 391–408 (ILIN…LILQ), 423–443 (IAMT…GILF), and 461–481 (VFFV…KPFL).

Belongs to the major facilitator superfamily. Strongly expressed in developing leaves, differentiating zones of root tips and sepals of developing flowers. Restricted to vascular tissues in older leaves, mature roots, flowers, anthers and filaments. Not expressed in developing anthers.

It is found in the vacuole membrane. Its function is as follows. Major facilitator superfamily (MFS) transporter involved in zinc tolerance by participating in vacuolar sequestration of zinc. This is Protein ZINC INDUCED FACILITATOR 1 (ZIF1) from Arabidopsis thaliana (Mouse-ear cress).